A 467-amino-acid polypeptide reads, in one-letter code: Chromosomal replication initiator protein DnaA (467 aa).

The interval 1–84 is domain I, interacts with DnaA modulators; sequence MDISLDQLWD…LQVEFSVSPH (84 aa). Residues 84–125 form a domain II region; sequence HASVEAEPPSRAISPTSGRAGSLPASTTLGLEVGGSLPMRAP. The interval 89-108 is disordered; it reads AEPPSRAISPTSGRAGSLPA. Residues 96-108 show a composition bias toward polar residues; the sequence is ISPTSGRAGSLPA. The tract at residues 126–342 is domain III, AAA+ region; the sequence is DLNPKYSFSR…GALIRAVAYV (217 aa). ATP-binding residues include Gly170, Gly172, Lys173, and Thr174. The domain IV, binds dsDNA stretch occupies residues 343 to 467; that stretch reads SISGLPMSVE…LRVVANSRSS (125 aa).

It belongs to the DnaA family. In terms of assembly, oligomerizes as a right-handed, spiral filament on DNA at oriC.

The protein localises to the cytoplasm. Its function is as follows. Plays an essential role in the initiation and regulation of chromosomal replication. ATP-DnaA binds to the origin of replication (oriC) to initiate formation of the DNA replication initiation complex once per cell cycle. Binds the DnaA box (a 9 base pair repeat at the origin) and separates the double-stranded (ds)DNA. Forms a right-handed helical filament on oriC DNA; dsDNA binds to the exterior of the filament while single-stranded (ss)DNA is stabiized in the filament's interior. The ATP-DnaA-oriC complex binds and stabilizes one strand of the AT-rich DNA unwinding element (DUE), permitting loading of DNA polymerase. After initiation quickly degrades to an ADP-DnaA complex that is not apt for DNA replication. Binds acidic phospholipids. This is Chromosomal replication initiator protein DnaA from Synechococcus sp. (strain JA-2-3B'a(2-13)) (Cyanobacteria bacterium Yellowstone B-Prime).